The primary structure comprises 198 residues: Protein GrpE (198 aa).

A compositionally biased stretch (basic and acidic residues) spans 1 to 18 (MSEQEQKVEIPEVEKQEE). The interval 1–33 (MSEQEQKVEIPEVEKQEEVVVEETQQAEHSQEF) is disordered.

It belongs to the GrpE family. In terms of assembly, homodimer.

The protein resides in the cytoplasm. Participates actively in the response to hyperosmotic and heat shock by preventing the aggregation of stress-denatured proteins, in association with DnaK and GrpE. It is the nucleotide exchange factor for DnaK and may function as a thermosensor. Unfolded proteins bind initially to DnaJ; upon interaction with the DnaJ-bound protein, DnaK hydrolyzes its bound ATP, resulting in the formation of a stable complex. GrpE releases ADP from DnaK; ATP binding to DnaK triggers the release of the substrate protein, thus completing the reaction cycle. Several rounds of ATP-dependent interactions between DnaJ, DnaK and GrpE are required for fully efficient folding. The sequence is that of Protein GrpE from Haemophilus influenzae (strain ATCC 51907 / DSM 11121 / KW20 / Rd).